Consider the following 445-residue polypeptide: Phosphoglucosamine mutase (445 aa).

Residue S99 is the Phosphoserine intermediate of the active site. 4 residues coordinate Mg(2+): S99, D242, D244, and D246. The residue at position 99 (S99) is a Phosphoserine.

Belongs to the phosphohexose mutase family. The cofactor is Mg(2+). Activated by phosphorylation.

It catalyses the reaction alpha-D-glucosamine 1-phosphate = D-glucosamine 6-phosphate. In terms of biological role, catalyzes the conversion of glucosamine-6-phosphate to glucosamine-1-phosphate. This is Phosphoglucosamine mutase from Helicobacter pylori (strain HPAG1).